The chain runs to 447 residues: GTPase Der (447 aa).

EngA-type G domains lie at 3-167 (PVIA…FAQR) and 181-354 (IRLA…AAAM). GTP contacts are provided by residues 9 to 16 (GRPNVGKS), 56 to 60 (DTGGF), 119 to 122 (NKAE), 187 to 194 (GRPNVGKS), 234 to 238 (DTAGI), and 299 to 302 (NKWD). A KH-like domain is found at 355–439 (SNLSTPKLTR…PLRIELRSGK (85 aa)).

The protein belongs to the TRAFAC class TrmE-Era-EngA-EngB-Septin-like GTPase superfamily. EngA (Der) GTPase family. Associates with the 50S ribosomal subunit.

In terms of biological role, GTPase that plays an essential role in the late steps of ribosome biogenesis. This is GTPase Der from Herminiimonas arsenicoxydans.